Here is a 128-residue protein sequence, read N- to C-terminus: UPF0102 protein BCG_2919c (128 aa).

It belongs to the UPF0102 family.

The polypeptide is UPF0102 protein BCG_2919c (Mycobacterium bovis (strain BCG / Pasteur 1173P2)).